The sequence spans 116 residues: Transcription elongation factor SPT4 homolog 1 (116 aa).

The C4-type zinc-finger motif lies at 19–39 (CLRCRLVKTYDQFRDSGCENC).

The protein belongs to the SPT4 family.

It is found in the nucleus. Functionally, may regulate transcription elongation by RNA polymerase II. May enhance transcriptional pausing at sites proximal to the promoter, which may in turn facilitate the assembly of an elongation competent RNA polymerase II complex. The polypeptide is Transcription elongation factor SPT4 homolog 1 (Arabidopsis thaliana (Mouse-ear cress)).